Here is a 359-residue protein sequence, read N- to C-terminus: Spermine synthase (359 aa).

A PABS domain is found at 53-304; the sequence is SGWFSEPHPR…GVIGFVLCST (252 aa). Residue Gln-99 coordinates S-adenosyl 3-(methylsulfanyl)propylamine. Tyr-129 contributes to the spermidine binding site. An S-adenosyl 3-(methylsulfanyl)propylamine-binding site is contributed by Gln-130. Asp-154 serves as a coordination point for spermidine. Residues Glu-174 and 205–206 contribute to the S-adenosyl 3-(methylsulfanyl)propylamine site; that span reads DA. The active-site Proton acceptor is Asp-224. Tyr-292 contributes to the putrescine binding site.

Belongs to the spermidine/spermine synthase family. Heterodimer. Component of a multiprotein complex. Interacts with SPDSYN1 and SPDSYN2. As to expression, expressed predominantly in stem internodes, flower buds and roots.

The enzyme catalyses S-adenosyl 3-(methylsulfanyl)propylamine + spermidine = spermine + S-methyl-5'-thioadenosine + H(+). The protein operates within amine and polyamine biosynthesis; spermine biosynthesis; spermine from spermidine: step 1/1. The protein is Spermine synthase (SPMS) of Arabidopsis thaliana (Mouse-ear cress).